A 440-amino-acid chain; its full sequence is Chromosomal replication initiator protein DnaA (440 aa).

Positions 1-75 are domain I, interacts with DnaA modulators; sequence MNPNQILENL…QSGNKASVLI (75 aa). Residues 75-99 are domain II; the sequence is IQAQSAKQSSKSTKIDIAHIKAQST. A domain III, AAA+ region region spans residues 100–316; that stretch reads ILNPSFTFES…GIIISLNAYA (217 aa). Positions 146, 148, 149, and 150 each coordinate ATP. The domain IV, binds dsDNA stretch occupies residues 317–440; the sequence is TILGQEITLE…KNKILVKSQS (124 aa).

Belongs to the DnaA family. Oligomerizes as a right-handed, spiral filament on DNA at oriC.

Its subcellular location is the cytoplasm. Plays an essential role in the initiation and regulation of chromosomal replication. ATP-DnaA binds to the origin of replication (oriC) to initiate formation of the DNA replication initiation complex once per cell cycle. Binds the DnaA box (a 9 base pair repeat at the origin) and separates the double-stranded (ds)DNA. Forms a right-handed helical filament on oriC DNA; dsDNA binds to the exterior of the filament while single-stranded (ss)DNA is stabiized in the filament's interior. The ATP-DnaA-oriC complex binds and stabilizes one strand of the AT-rich DNA unwinding element (DUE), permitting loading of DNA polymerase. After initiation quickly degrades to an ADP-DnaA complex that is not apt for DNA replication. Binds acidic phospholipids. This chain is Chromosomal replication initiator protein DnaA, found in Campylobacter jejuni subsp. jejuni serotype O:6 (strain 81116 / NCTC 11828).